The primary structure comprises 379 residues: Deoxyhypusine synthase (379 aa).

Residues 108–112 (SNLIS), 134–136 (TAG), Glu-140, and Asp-257 contribute to the NAD(+) site. 139–140 (EE) serves as a coordination point for spermidine. Asp-262 is a binding site for spermidine. An NAD(+)-binding site is contributed by Gly-304. His-309 is a spermidine binding site. Position 329–330 (329–330 (TG)) interacts with NAD(+). Residues 335–337 (GSD) and 344–350 (EAVSWGK) contribute to the spermidine site. Lys-350 acts as the Nucleophile in catalysis. 363–364 (DA) contributes to the NAD(+) binding site.

This sequence belongs to the deoxyhypusine synthase family. The cofactor is NAD(+).

It carries out the reaction [eIF5A protein]-L-lysine + spermidine = [eIF5A protein]-deoxyhypusine + propane-1,3-diamine. Its pathway is protein modification; eIF5A hypusination. Its function is as follows. Catalyzes the NAD-dependent oxidative cleavage of spermidine and the subsequent transfer of the butylamine moiety of spermidine to the epsilon-amino group of a specific lysine residue of the eIF-5A precursor protein to form the intermediate deoxyhypusine residue. This chain is Deoxyhypusine synthase (DYS1), found in Kluyveromyces lactis (strain ATCC 8585 / CBS 2359 / DSM 70799 / NBRC 1267 / NRRL Y-1140 / WM37) (Yeast).